Here is a 353-residue protein sequence, read N- to C-terminus: DNA polymerase IV (353 aa).

The UmuC domain occupies 6–187 (IIHIDCDCFY…LPVTKLHGVG (182 aa)). Mg(2+)-binding residues include D10 and D105. The active site involves E106.

The protein belongs to the DNA polymerase type-Y family. Monomer. The cofactor is Mg(2+).

Its subcellular location is the cytoplasm. The catalysed reaction is DNA(n) + a 2'-deoxyribonucleoside 5'-triphosphate = DNA(n+1) + diphosphate. Functionally, poorly processive, error-prone DNA polymerase involved in untargeted mutagenesis. Copies undamaged DNA at stalled replication forks, which arise in vivo from mismatched or misaligned primer ends. These misaligned primers can be extended by PolIV. Exhibits no 3'-5' exonuclease (proofreading) activity. May be involved in translesional synthesis, in conjunction with the beta clamp from PolIII. This is DNA polymerase IV from Pseudomonas savastanoi pv. phaseolicola (strain 1448A / Race 6) (Pseudomonas syringae pv. phaseolicola (strain 1448A / Race 6)).